Consider the following 353-residue polypeptide: uncharacterized protein (353 aa).

Positions 1–30 (MHLRHLFSSRLRGSLLLGSLLVVSSFSTQA) are cleaved as a signal peptide.

In terms of assembly, monomer.

This is an uncharacterized protein from Escherichia coli (strain K12).